A 32-amino-acid chain; its full sequence is Cytochrome b6-f complex subunit 7 (32 aa).

Residues 9-27 (AAVFWVLIPVGLAGGALLL) form a helical membrane-spanning segment.

The protein belongs to the PetM family. The 4 large subunits of the cytochrome b6-f complex are cytochrome b6, subunit IV (17 kDa polypeptide, PetD), cytochrome f and the Rieske protein, while the 4 small subunits are PetG, PetL, PetM and PetN. The complex functions as a dimer.

The protein localises to the cellular thylakoid membrane. Functionally, component of the cytochrome b6-f complex, which mediates electron transfer between photosystem II (PSII) and photosystem I (PSI), cyclic electron flow around PSI, and state transitions. This chain is Cytochrome b6-f complex subunit 7, found in Prochlorococcus marinus (strain MIT 9303).